The primary structure comprises 60 residues: Large ribosomal subunit protein bL32 (60 aa).

The tract at residues 1–60 is disordered; that stretch reads MAVQQNKKSPSKRGMHRSHDALTNPPLAIEPTTGETHLRHHISPNGFYRGKKVIKTKNDD. Residues 49–60 are compositionally biased toward basic residues; it reads RGKKVIKTKNDD.

The protein belongs to the bacterial ribosomal protein bL32 family.

In Nitrosomonas eutropha (strain DSM 101675 / C91 / Nm57), this protein is Large ribosomal subunit protein bL32.